The sequence spans 312 residues: Small kinetochore-associated protein (312 aa).

A compositionally biased stretch (basic and acidic residues) spans 1–13 (MATHKAEAQETDF). 3 disordered regions span residues 1–32 (MATH…PSSR), 55–176 (LKRS…KDKN), and 221–242 (KGLN…DPTD). Polar residues predominate over residues 75–84 (RPTTMASSKT). 2 stretches are compositionally biased toward basic and acidic residues: residues 131–143 (DVTK…RENG) and 166–176 (QKPEEDLKDKN). An interaction with SPAG5 region spans residues 156 to 312 (IRSSYKPLSK…LEEMEQLLEM (157 aa)). Residues 169–210 (EEDLKDKNELLEAVNKQLHQKLTETQGELKDLTQKVELLEKF) adopt a coiled-coil conformation. A coiled-coil region spans residues 246–288 (LLETLKDELKLFNETAKKQMEELQALKVKLKLKEKERIQFLEQ).

In terms of assembly, part of an astrin (SPAG5)-kinastrin (SKAP) complex containing KNSTRN, SPAG5, PLK1, DYNLL1 and SGO2. Interacts with SPAG5. Directly binds to microtubules, although at relatively low affinity. Interacts with CENPE; this interaction greatly favors microtubule-binding. Interacts with DSN1/MIS13; leading to localization to kinetochores. Interacts with MAPRE1/EB1; leading to localization to the microtubule plus ends. Interacts with PRPF19. Interacts with DYNLL1. Interacts with MAP4.

It localises to the nucleus. It is found in the chromosome. Its subcellular location is the centromere. The protein resides in the kinetochore. The protein localises to the cytoplasm. It localises to the cytoskeleton. It is found in the spindle pole. Its subcellular location is the microtubule organizing center. Essential component of the mitotic spindle required for faithful chromosome segregation and progression into anaphase. Promotes the metaphase-to-anaphase transition and is required for chromosome alignment, normal timing of sister chromatid segregation, and maintenance of spindle pole architecture. The astrin (SPAG5)-kinastrin (SKAP) complex promotes stable microtubule-kinetochore attachments. Required for kinetochore oscillations and dynamics of microtubule plus-ends during live cell mitosis, possibly by forming a link between spindle microtubule plus-ends and mitotic chromosomes to achieve faithful cell division. The chain is Small kinetochore-associated protein (Knstrn) from Rattus norvegicus (Rat).